We begin with the raw amino-acid sequence, 208 residues long: V-type ATP synthase subunit E (208 aa).

Belongs to the V-ATPase E subunit family.

Its function is as follows. Produces ATP from ADP in the presence of a proton gradient across the membrane. The chain is V-type ATP synthase subunit E (atpE) from Chlamydia muridarum (strain MoPn / Nigg).